A 126-amino-acid chain; its full sequence is Large ribosomal subunit protein bL12 (126 aa).

It belongs to the bacterial ribosomal protein bL12 family. As to quaternary structure, homodimer. Part of the ribosomal stalk of the 50S ribosomal subunit. Forms a multimeric L10(L12)X complex, where L10 forms an elongated spine to which 2 to 4 L12 dimers bind in a sequential fashion. Binds GTP-bound translation factors.

In terms of biological role, forms part of the ribosomal stalk which helps the ribosome interact with GTP-bound translation factors. Is thus essential for accurate translation. In Acidovorax sp. (strain JS42), this protein is Large ribosomal subunit protein bL12.